The chain runs to 404 residues: MKLPIYLDYSATCPVDPRAAEKMMQCLTLDGNFGNPASRSHRFGWQAEEAVDEARNHVADLIGADPREIVFTSGATESNNLAIKGAAHFYVKQGKHIITCKTEHKAVLDTCRHLESEGYEVTYLDPQSDGLLTLPQIEAAMRPDTILVSIMHVNNEIGVIQDLAAIGELCRARKILFHVDAAQSAGKVEIDVDAMKIDLLSLSAHKVYGPKGIGALYVRRKPRVRLEAQMHGGGHERGMRSGTLPTHQIVGMGEAFRIAKAEMAEENVRIKALRDRLYDGLKDIEQVFVNGSTEHRVAGNLNISFAYVEGESLMMALKDLAVSSGSACTSASLEPSYVLRALGLNDELAHSSIRFSIGRFTTAEEIDYAIGLIRDSIGKLRDLSPLWDMYKEGIDLSKVEWVSH.

Residues 75–76 (AT), Asn-155, Gln-183, and 203–205 (SAH) each bind pyridoxal 5'-phosphate. Lys-206 is subject to N6-(pyridoxal phosphate)lysine. Thr-243 is a pyridoxal 5'-phosphate binding site. Cys-328 acts as the Cysteine persulfide intermediate in catalysis. Cys-328 contributes to the [2Fe-2S] cluster binding site.

It belongs to the class-V pyridoxal-phosphate-dependent aminotransferase family. NifS/IscS subfamily. In terms of assembly, homodimer. Forms a heterotetramer with IscU, interacts with other sulfur acceptors. Requires pyridoxal 5'-phosphate as cofactor.

Its subcellular location is the cytoplasm. The catalysed reaction is (sulfur carrier)-H + L-cysteine = (sulfur carrier)-SH + L-alanine. The protein operates within cofactor biosynthesis; iron-sulfur cluster biosynthesis. In terms of biological role, master enzyme that delivers sulfur to a number of partners involved in Fe-S cluster assembly, tRNA modification or cofactor biosynthesis. Catalyzes the removal of elemental sulfur atoms from cysteine to produce alanine. Functions as a sulfur delivery protein for Fe-S cluster synthesis onto IscU, an Fe-S scaffold assembly protein, as well as other S acceptor proteins. This is Cysteine desulfurase IscS from Tolumonas auensis (strain DSM 9187 / NBRC 110442 / TA 4).